Here is a 1258-residue protein sequence, read N- to C-terminus: Cohesin subunit SA-1 (1258 aa).

Residues 1 to 59 (MITSELPVLQDSTNETTAHSDAGSELEETEVKGKRKRGRPGRPPSTNKKPRKSPGEKSR) are disordered. The segment covering 10–19 (QDSTNETTAH) has biased composition (polar residues). Ser24 carries the post-translational modification Phosphoserine. An SCD domain is found at 296–381 (FVHRYRDAIA…NRFKDRIVSM (86 aa)). Ser756, Ser1062, and Ser1065 each carry phosphoserine. A disordered region spans residues 1055-1148 (GGEDDRMSVN…EHGSEPDFLH (94 aa)). Residues 1062–1075 (SVNSGSSSSKTSSV) are compositionally biased toward low complexity. Residues 1076-1087 (RSKKGRPPLHRK) are compositionally biased toward basic residues. A Phosphoserine modification is found at Ser1093. The segment covering 1095–1106 (DNTWLNRTDTMI) has biased composition (polar residues). Over residues 1137–1146 (ESEHGSEPDF) the composition is skewed to basic and acidic residues. Residue Lys1161 forms a Glycyl lysine isopeptide (Lys-Gly) (interchain with G-Cter in SUMO2) linkage.

It belongs to the SCC3 family. As to quaternary structure, cohesin complexes are composed of a heterodimer between a SMC1 protein (SMC1A or SMC1B) and SMC3, which are attached via their hinge domain, and RAD21 which link them at their heads, and one STAG protein (STAG1, STAG2 or STAG3). In cohesin complexes, STAG1 is mutually exclusive with STAG2 and STAG3. Interacts directly with RAD21 in cohesin complex. The cohesin complex interacts with the cohesin loading complex subunits NIPBL/Scc2 (via HEAT repeats) and MAU2/Scc4. NIPBL directly contacts all members of the complex, RAD21, SMC1A/B, SMC3 and STAG1. In terms of processing, phosphorylated by PLK1. The large dissociation of cohesin from chromosome arms during prophase is partly due to its phosphorylation.

It is found in the nucleus. It localises to the chromosome. Functionally, component of cohesin complex, a complex required for the cohesion of sister chromatids after DNA replication. The cohesin complex apparently forms a large proteinaceous ring within which sister chromatids can be trapped. At anaphase, the complex is cleaved and dissociates from chromatin, allowing sister chromatids to segregate. The cohesin complex may also play a role in spindle pole assembly during mitosis. In Mus musculus (Mouse), this protein is Cohesin subunit SA-1 (Stag1).